We begin with the raw amino-acid sequence, 472 residues long: MSRRVVRQSKFRHVFGQAAKADQAYEDIRVSKVTWDSSFCAVNPKFLAIIVEAGGGGAFIVLPLAKTGRVDKNYPLVTGHTAPVLDIDWCPHNDNVIASASDDTTIMVWQIPDYTPMRNITEPIITLEGHSKRVGILSWHPTARNVLLSAGGDNVIIIWNVGTGEVLLSLDDMHPDVIHSVCWNSNGSLLATTCKDKTLRIIDPRKGQVVAEQARPHEGARPLRAVFTADGKLLSTGFSRMSERQLALWDPNNFEEPVALQEMDTSNGVLLPFYDPDSSIVYLCGKGDSSIRYFEITDEPPFVHYLNTFSSKEPQRGMGFMPKRGLDVSKCEIARFYKLHERKCEPIIMTVPRKSDLFQDDLYPDTPGPEPALEADEWLSGQDAEPVLISLRDGYVPPKHRELRVTKRNILDVRPPSGPRRSQSASDAPLSQQHTLETLLEEIKALRERVQAQEQRITALENMLCELVDGTD.

WD repeat units follow at residues 23-64 (QAYE…VLPL), 72-111 (KNYPLVTGHTAPVLDIDWCPHNDNVIASASDDTTIMVWQI), 122-161 (EPIITLEGHSKRVGILSWHPTARNVLLSAGGDNVIIIWNV), 165-204 (EVLLSLDDMHPDVIHSVCWNSNGSLLATTCKDKTLRIIDP), 210-251 (VAEQ…LWDP), and 256-296 (EPVA…YFEI). A disordered region spans residues 407 to 433 (KRNILDVRPPSGPRRSQSASDAPLSQQ). A compositionally biased stretch (polar residues) spans 420-433 (RRSQSASDAPLSQQ). A coiled-coil region spans residues 430 to 464 (LSQQHTLETLLEEIKALRERVQAQEQRITALENML).

The chain is Coronin-6 (CORO6) from Homo sapiens (Human).